The following is a 276-amino-acid chain: CASP-like protein 4A3 (276 aa).

Positions 1-13 (MPSMSPSSISTEK) are enriched in polar residues. Residues 1-76 (MPSMSPSSIS…PVKIEETPSP (76 aa)) form a disordered region. The Cytoplasmic portion of the chain corresponds to 1–126 (MPSMSPSSIS…RRSRREEIVK (126 aa)). Positions 43 to 72 (SLDHSSDSEKEDEKRRPESRRNKNPVKIEE) are enriched in basic and acidic residues. A helical transmembrane segment spans residues 127–147 (FVALGFRLSEVVLALISFSIM). At 148–167 (AADKTKGWSGDSFDRYKEYR) the chain is on the extracellular side. A helical membrane pass occupies residues 168–188 (FCLSVNVVAFIYASFQACDLA). Over 189 to 205 (YHLVKEKHLISHHLRPL) the chain is Cytoplasmic. A helical membrane pass occupies residues 206–226 (FEFIIDQVLAYLLMCASTAAV). Residues 227–244 (TRVDDWVSNWGKDDFTEM) lie on the Extracellular side of the membrane. A helical transmembrane segment spans residues 245–265 (ASASIAMSFLTFLAFAFSSLI). Topologically, residues 266 to 276 (SGYNLFNQDSL) are cytoplasmic.

The protein belongs to the Casparian strip membrane proteins (CASP) family. Homodimer and heterodimers.

The protein resides in the cell membrane. This Arabidopsis lyrata subsp. lyrata (Lyre-leaved rock-cress) protein is CASP-like protein 4A3.